We begin with the raw amino-acid sequence, 180 residues long: NADH-quinone oxidoreductase subunit B (180 aa).

[4Fe-4S] cluster contacts are provided by Cys-59, Cys-60, Cys-124, and Cys-154.

Belongs to the complex I 20 kDa subunit family. As to quaternary structure, NDH-1 is composed of 14 different subunits. Subunits NuoB, C, D, E, F, and G constitute the peripheral sector of the complex. It depends on [4Fe-4S] cluster as a cofactor.

Its subcellular location is the cell inner membrane. It catalyses the reaction a quinone + NADH + 5 H(+)(in) = a quinol + NAD(+) + 4 H(+)(out). In terms of biological role, NDH-1 shuttles electrons from NADH, via FMN and iron-sulfur (Fe-S) centers, to quinones in the respiratory chain. The immediate electron acceptor for the enzyme in this species is believed to be ubiquinone. Couples the redox reaction to proton translocation (for every two electrons transferred, four hydrogen ions are translocated across the cytoplasmic membrane), and thus conserves the redox energy in a proton gradient. The protein is NADH-quinone oxidoreductase subunit B of Beijerinckia indica subsp. indica (strain ATCC 9039 / DSM 1715 / NCIMB 8712).